Reading from the N-terminus, the 292-residue chain is Elongation factor Ts (292 aa).

The tract at residues 80-83 (TDFV) is involved in Mg(2+) ion dislocation from EF-Tu.

The protein belongs to the EF-Ts family.

Its subcellular location is the cytoplasm. In terms of biological role, associates with the EF-Tu.GDP complex and induces the exchange of GDP to GTP. It remains bound to the aminoacyl-tRNA.EF-Tu.GTP complex up to the GTP hydrolysis stage on the ribosome. The chain is Elongation factor Ts from Psychrobacter sp. (strain PRwf-1).